We begin with the raw amino-acid sequence, 312 residues long: Pseudouridine-5'-phosphate glycosidase 2 (312 aa).

Glu31 (proton donor) is an active-site residue. Substrate-binding residues include Lys93 and Val113. Asp145 serves as a coordination point for Mn(2+). Residue 147–149 (SAD) participates in substrate binding. Lys166 (nucleophile) is an active-site residue.

The protein belongs to the pseudouridine-5'-phosphate glycosidase family. Homotrimer. Mn(2+) is required as a cofactor.

The enzyme catalyses D-ribose 5-phosphate + uracil = psi-UMP + H2O. Functionally, catalyzes the reversible cleavage of pseudouridine 5'-phosphate (PsiMP) to ribose 5-phosphate and uracil. Functions biologically in the cleavage direction, as part of a pseudouridine degradation pathway. The chain is Pseudouridine-5'-phosphate glycosidase 2 from Photorhabdus laumondii subsp. laumondii (strain DSM 15139 / CIP 105565 / TT01) (Photorhabdus luminescens subsp. laumondii).